A 238-amino-acid polypeptide reads, in one-letter code: 7-cyano-7-deazaguanine synthase (238 aa).

An ATP-binding site is contributed by 14–24 (FSGGQDSTTCL). Zn(2+) contacts are provided by Cys195, Cys204, Cys207, and Cys210.

This sequence belongs to the QueC family. The cofactor is Zn(2+).

The catalysed reaction is 7-carboxy-7-deazaguanine + NH4(+) + ATP = 7-cyano-7-deazaguanine + ADP + phosphate + H2O + H(+). Its pathway is purine metabolism; 7-cyano-7-deazaguanine biosynthesis. Functionally, catalyzes the ATP-dependent conversion of 7-carboxy-7-deazaguanine (CDG) to 7-cyano-7-deazaguanine (preQ(0)). The protein is 7-cyano-7-deazaguanine synthase of Baumannia cicadellinicola subsp. Homalodisca coagulata.